The sequence spans 252 residues: Two-component response regulator ORR2 (252 aa).

The 151-residue stretch at 7-157 folds into the Response regulatory domain; it reads RVLVVDDSPV…DVQRLRKCSG (151 aa). Position 90 is a 4-aspartylphosphate (Asp-90).

The protein belongs to the ARR family. Type-A subfamily. Post-translationally, two-component system major event consists of a His-to-Asp phosphorelay between a sensor histidine kinase (HK) and a response regulator (RR). In plants, the His-to-Asp phosphorelay involves an additional intermediate named Histidine-containing phosphotransfer protein (HPt). This multistep phosphorelay consists of a His-Asp-His-Asp sequential transfer of a phosphate group between first a His and an Asp of the HK protein, followed by the transfer to a conserved His of the HPt protein and finally the transfer to an Asp in the receiver domain of the RR protein. In terms of tissue distribution, expressed in mature leaves and flowers, and at low levels in roots and shoots.

Its function is as follows. Functions as a response regulator involved in His-to-Asp phosphorelay signal transduction system. Phosphorylation of the Asp residue in the receiver domain activates the ability of the protein to promote the transcription of target genes. Type-A response regulators seem to act as negative regulators of the cytokinin signaling. The polypeptide is Two-component response regulator ORR2 (Oryza sativa subsp. indica (Rice)).